A 323-amino-acid chain; its full sequence is Phosphatidylethanolamine:ceramide ethanolaminephosphotransferase (323 aa).

Over 1–26 the chain is Cytoplasmic; that stretch reads MAVPPVEMYSGSFWNRMRKPLPLRTQ. A helical membrane pass occupies residues 27 to 47; it reads VIRFTVVFVIVSFILVVALQI. The Extracellular portion of the chain corresponds to 48-74; it reads THERMPDPKVTKPLPDLGFELLTKVPG. A helical transmembrane segment spans residues 75-95; that stretch reads MYVLADCCIGFLNILSVFTAF. Residues 96 to 147 lie on the Cytoplasmic side of the membrane; the sequence is KLYLLHRHCVGSGEPELPCNIPGVSRFFLSVWLCKENCRIELRNIHTIAWIR. Residues 148–168 form a helical membrane-spanning segment; that stretch reads FITSYALLLLSRSIIMVVTSL. Over 169–187 the chain is Extracellular; that stretch reads PNPDDLCQNPPKIENRVKD. The chain crosses the membrane as a helical span at residues 188 to 208; that stretch reads ILLTVLTAGAGSIHCGDLMYS. At 209–233 the chain is on the cytoplasmic side; sequence GHTVILTLHLMFHWIYGAMVHWSFR. The chain crosses the membrane as a helical span at residues 234–254; sequence PVVTVVAIFGYYCIVASRFHY. Over 255–257 the chain is Extracellular; it reads TDD. Residues 258-278 form a helical membrane-spanning segment; it reads VLVAIYLTIATFIAVGHNADG. The Cytoplasmic segment spans residues 279–323; that stretch reads APWQLQLFIRWWPCCGANSREVAEDGVPVAIVIKNEEMMNFEGKS.

The protein belongs to the sphingomyelin synthase family.

The protein resides in the membrane. It carries out the reaction an N-acylsphing-4-enine + a 1,2-diacyl-sn-glycero-3-phosphoethanolamine = an N-acylsphing-4-enine 1-phosphoethanolamine + a 1,2-diacyl-sn-glycerol. It catalyses the reaction an N-acylsphinganine + a 1,2-diacyl-sn-glycero-3-phosphoethanolamine = an N-acylsphinganine-1-phosphoethanolamine + a 1,2-diacyl-sn-glycerol. In terms of biological role, predominantly synthesizes ethanolamine-phosphorylceramide (EPC), with minimal sphingomyelin (SM)/inositol phosphorylceramide (IPC) synthase activity. Specificity is likely to be defined by residues in the lumenal catalytic domain that interact with the polar head groups of the phospholipid donors. EPC is synthesized by both stages of the parasite life cycle, bloodstream forms (BSF) and procyclic forms (PCF), by transferring the phosphoethanolamine from a 1,2-diacyl-sn-glycero-3-phosphoethanolamine to an N-acylsphing-4-enine (ceramide) or an N-acylsphinganine (dihydroceramide). Similarly, SM is synthesized by transferring the phosphocholine from a 1,2-diacyl-sn-glycero-3-phosphocholine to ceramide or dihydroceramide by BSF and PCF, while IPC is confined to PCF. The ceramide/dihydroceramide ratios are skewed towards dihydroceramide in PCF parasites and ceramide in BSF parasites, this is likely due to differential expression and/or regulation of dihydroceramide desaturase, the enzyme responsible for converting dihydroceramide to ceramide. The protein is Phosphatidylethanolamine:ceramide ethanolaminephosphotransferase of Trypanosoma brucei brucei.